A 472-amino-acid chain; its full sequence is Probable glycine dehydrogenase (decarboxylating) subunit 2 (472 aa).

An N6-(pyridoxal phosphate)lysine modification is found at Lys-268.

This sequence belongs to the GcvP family. C-terminal subunit subfamily. The glycine cleavage system is composed of four proteins: P, T, L and H. In this organism, the P 'protein' is a heterodimer of two subunits. The cofactor is pyridoxal 5'-phosphate.

The catalysed reaction is N(6)-[(R)-lipoyl]-L-lysyl-[glycine-cleavage complex H protein] + glycine + H(+) = N(6)-[(R)-S(8)-aminomethyldihydrolipoyl]-L-lysyl-[glycine-cleavage complex H protein] + CO2. Functionally, the glycine cleavage system catalyzes the degradation of glycine. The P protein binds the alpha-amino group of glycine through its pyridoxal phosphate cofactor; CO(2) is released and the remaining methylamine moiety is then transferred to the lipoamide cofactor of the H protein. The polypeptide is Probable glycine dehydrogenase (decarboxylating) subunit 2 (Thermoplasma volcanium (strain ATCC 51530 / DSM 4299 / JCM 9571 / NBRC 15438 / GSS1)).